The primary structure comprises 111 residues: Large ribosomal subunit protein uL22 (111 aa).

Belongs to the universal ribosomal protein uL22 family. In terms of assembly, part of the 50S ribosomal subunit.

This protein binds specifically to 23S rRNA; its binding is stimulated by other ribosomal proteins, e.g. L4, L17, and L20. It is important during the early stages of 50S assembly. It makes multiple contacts with different domains of the 23S rRNA in the assembled 50S subunit and ribosome. In terms of biological role, the globular domain of the protein is located near the polypeptide exit tunnel on the outside of the subunit, while an extended beta-hairpin is found that lines the wall of the exit tunnel in the center of the 70S ribosome. The polypeptide is Large ribosomal subunit protein uL22 (Chlamydia trachomatis serovar A (strain ATCC VR-571B / DSM 19440 / HAR-13)).